Here is a 316-residue protein sequence, read N- to C-terminus: Ribosomal RNA small subunit methyltransferase H (316 aa).

S-adenosyl-L-methionine is bound by residues 35 to 37, Asp-55, Phe-79, Asp-101, and Gln-108; that span reads GGH.

Belongs to the methyltransferase superfamily. RsmH family.

It localises to the cytoplasm. It carries out the reaction cytidine(1402) in 16S rRNA + S-adenosyl-L-methionine = N(4)-methylcytidine(1402) in 16S rRNA + S-adenosyl-L-homocysteine + H(+). Its function is as follows. Specifically methylates the N4 position of cytidine in position 1402 (C1402) of 16S rRNA. In Vibrio proteolyticus (Aeromonas proteolytica), this protein is Ribosomal RNA small subunit methyltransferase H.